Here is a 321-residue protein sequence, read N- to C-terminus: MSKPIQMERGVKYRDADKMALIPIKNMPTEQKEVLRKPEWMKIKLPADSQRIQDIKAAMRKNNLHSVCEEASCPNLAECFNHGTATFMILGAICTRRCPFCDVAHGRPNAPEAEEPKKLAQTIHDMKLKYVVITSVDRDDLRDGGAQHFADCNREIRALNPHIKIETLVPDFRGRMEVALEALKDNPPDVFNHNLETAPRLYRKVRPGANYKWSLELLRQFKEQHPHVPTKSGLMMGLGETKEEIVEVLKDLRAHGVTMLTLGQYLAPSRHHLPVERYVPPAEFDELKEVALELGFTHAACGPFVRSSYHADLQAKGLEVK.

[4Fe-4S] cluster is bound by residues cysteine 68, cysteine 73, cysteine 79, cysteine 94, cysteine 98, cysteine 101, and serine 308. The Radical SAM core domain maps to 80–297; the sequence is FNHGTATFMI…KEVALELGFT (218 aa).

The protein belongs to the radical SAM superfamily. Lipoyl synthase family. It depends on [4Fe-4S] cluster as a cofactor.

The protein resides in the cytoplasm. It catalyses the reaction [[Fe-S] cluster scaffold protein carrying a second [4Fe-4S](2+) cluster] + N(6)-octanoyl-L-lysyl-[protein] + 2 oxidized [2Fe-2S]-[ferredoxin] + 2 S-adenosyl-L-methionine + 4 H(+) = [[Fe-S] cluster scaffold protein] + N(6)-[(R)-dihydrolipoyl]-L-lysyl-[protein] + 4 Fe(3+) + 2 hydrogen sulfide + 2 5'-deoxyadenosine + 2 L-methionine + 2 reduced [2Fe-2S]-[ferredoxin]. The protein operates within protein modification; protein lipoylation via endogenous pathway; protein N(6)-(lipoyl)lysine from octanoyl-[acyl-carrier-protein]: step 2/2. Functionally, catalyzes the radical-mediated insertion of two sulfur atoms into the C-6 and C-8 positions of the octanoyl moiety bound to the lipoyl domains of lipoate-dependent enzymes, thereby converting the octanoylated domains into lipoylated derivatives. The polypeptide is Lipoyl synthase (Vibrio cholerae serotype O1 (strain ATCC 39315 / El Tor Inaba N16961)).